Reading from the N-terminus, the 440-residue chain is C4-dicarboxylate transport protein (440 aa).

9 consecutive transmembrane segments (helical) span residues 15-35 (VLVAITIGILLGHYYPETGVA), 46-66 (LIKMVIAPIIFCTVVSGIAGM), 78-98 (YALLYFEIVSTIALIIGLVVV), 146-166 (AFANGDILQVLMFSVLFGFAL), 190-210 (IINMIMKLAPIGAFGAMAFTI), 224-244 (LMACFYITCILFVLVVLGGIC), 291-311 (VVGLVIPTGYSFNLDGTSIYL), 332-352 (ITLLLVLLVASKGAAGVTGSG), and 354-374 (IVLAATLSAVGHLPVAGLALI). A disordered region spans residues 419 to 440 (GGSPLVDTRPTDDLGVAEGPAR).

Belongs to the dicarboxylate/amino acid:cation symporter (DAACS) (TC 2.A.23) family.

It localises to the cell inner membrane. In terms of biological role, responsible for the transport of dicarboxylates such as succinate, fumarate, and malate from the periplasm across the membrane. This is C4-dicarboxylate transport protein from Pseudomonas entomophila (strain L48).